A 55-amino-acid polypeptide reads, in one-letter code: Large ribosomal subunit protein bL33 (55 aa).

It belongs to the bacterial ribosomal protein bL33 family.

This Acidothermus cellulolyticus (strain ATCC 43068 / DSM 8971 / 11B) protein is Large ribosomal subunit protein bL33.